The chain runs to 303 residues: Ribonuclease Z (303 aa).

H61, H63, D65, H66, H139, D207, and H266 together coordinate Zn(2+). D65 acts as the Proton acceptor in catalysis.

Belongs to the RNase Z family. In terms of assembly, homodimer. Zn(2+) is required as a cofactor.

The catalysed reaction is Endonucleolytic cleavage of RNA, removing extra 3' nucleotides from tRNA precursor, generating 3' termini of tRNAs. A 3'-hydroxy group is left at the tRNA terminus and a 5'-phosphoryl group is left at the trailer molecule.. In terms of biological role, zinc phosphodiesterase, which displays some tRNA 3'-processing endonuclease activity. Probably involved in tRNA maturation, by removing a 3'-trailer from precursor tRNA. The protein is Ribonuclease Z of Clostridium kluyveri (strain ATCC 8527 / DSM 555 / NBRC 12016 / NCIMB 10680 / K1).